A 160-amino-acid polypeptide reads, in one-letter code: Nascent polypeptide-associated complex subunit alpha (160 aa).

Positions Thr10–Leu75 constitute an NAC-A/B domain. The region spanning Val120 to Thr159 is the UBA domain.

Belongs to the NAC-alpha family. In terms of assembly, part of the nascent polypeptide-associated complex (NAC), consisting of nacA and nacB.

The protein localises to the cytoplasm. It is found in the nucleus. Component of the nascent polypeptide-associated complex (NAC), a dynamic component of the ribosomal exit tunnel, protecting the emerging polypeptides from interaction with other cytoplasmic proteins to ensure appropriate nascent protein targeting. The NAC complex also promotes mitochondrial protein import by enhancing productive ribosome interactions with the outer mitochondrial membrane and blocks the inappropriate interaction of ribosomes translating non-secretory nascent polypeptides with translocation sites in the membrane of the endoplasmic reticulum. May also be involved in transcription regulation. This chain is Nascent polypeptide-associated complex subunit alpha (nacA), found in Dictyostelium discoideum (Social amoeba).